Reading from the N-terminus, the 248-residue chain is Anamorsin homolog (248 aa).

Positions phenylalanine 4–phenylalanine 129 are N-terminal SAM-like domain. The interval alanine 130–lysine 161 is linker. [2Fe-2S] cluster contacts are provided by cysteine 172, cysteine 181, cysteine 184, and cysteine 186. Positions cysteine 172–cysteine 186 are fe-S binding site A. [4Fe-4S] cluster contacts are provided by cysteine 209, cysteine 212, cysteine 220, and cysteine 223. Short sequence motifs (cx2C motif) lie at residues cysteine 209–cysteine 212 and cysteine 220–cysteine 223. A fe-S binding site B region spans residues cysteine 209–cysteine 223.

The protein belongs to the anamorsin family. As to quaternary structure, monomer. The cofactor is [2Fe-2S] cluster. [4Fe-4S] cluster is required as a cofactor.

The protein localises to the cytoplasm. It localises to the mitochondrion intermembrane space. Its function is as follows. Component of the cytosolic iron-sulfur (Fe-S) protein assembly (CIA) machinery. Required for the maturation of extramitochondrial Fe-S proteins. Part of an electron transfer chain functioning in an early step of cytosolic Fe-S biogenesis, facilitating the de novo assembly of a [4Fe-4S] cluster on the cytosolic Fe-S scaffold complex. Electrons are transferred from NADPH via a FAD- and FMN-containing diflavin oxidoreductase. Together with the diflavin oxidoreductase, also required for the assembly of the diferric tyrosyl radical cofactor of ribonucleotide reductase (RNR), probably by providing electrons for reduction during radical cofactor maturation in the catalytic small subunit. In Drosophila melanogaster (Fruit fly), this protein is Anamorsin homolog.